Here is a 177-residue protein sequence, read N- to C-terminus: Acireductone dioxygenase (177 aa).

The Fe(2+) site is built by H99, H101, E105, and H143. 4 residues coordinate Ni(2+): H99, H101, E105, and H143.

It belongs to the acireductone dioxygenase (ARD) family. Monomer. The cofactor is Fe(2+). Requires Ni(2+) as cofactor.

The catalysed reaction is 1,2-dihydroxy-5-(methylsulfanyl)pent-1-en-3-one + O2 = 3-(methylsulfanyl)propanoate + CO + formate + 2 H(+). It carries out the reaction 1,2-dihydroxy-5-(methylsulfanyl)pent-1-en-3-one + O2 = 4-methylsulfanyl-2-oxobutanoate + formate + 2 H(+). It functions in the pathway amino-acid biosynthesis; L-methionine biosynthesis via salvage pathway; L-methionine from S-methyl-5-thio-alpha-D-ribose 1-phosphate: step 5/6. Catalyzes 2 different reactions between oxygen and the acireductone 1,2-dihydroxy-3-keto-5-methylthiopentene (DHK-MTPene) depending upon the metal bound in the active site. Fe-containing acireductone dioxygenase (Fe-ARD) produces formate and 2-keto-4-methylthiobutyrate (KMTB), the alpha-ketoacid precursor of methionine in the methionine recycle pathway. Ni-containing acireductone dioxygenase (Ni-ARD) produces methylthiopropionate, carbon monoxide and formate, and does not lie on the methionine recycle pathway. The protein is Acireductone dioxygenase of Leptospira borgpetersenii serovar Hardjo-bovis (strain L550).